We begin with the raw amino-acid sequence, 326 residues long: Probable cell division protein WhiA (326 aa).

The H-T-H motif DNA-binding region spans 275–308; it reads SLDELGHYADPPMTKDAVAGRIRRLLAMADKRAS.

It belongs to the WhiA family.

In terms of biological role, involved in cell division and chromosome segregation. The chain is Probable cell division protein WhiA from Leifsonia xyli subsp. xyli (strain CTCB07).